A 1162-amino-acid chain; its full sequence is Spike glycoprotein (1162 aa).

An N-terminal signal peptide occupies residues 1-18 (MLVTPLLLVTLLCALCSA). Residues 19–1095 (ALYDSSSYVY…LKTYIKWPWY (1077 aa)) are Extracellular-facing. 22 N-linked (GlcNAc...) asparagine; by host glycosylation sites follow: N51, N77, N103, N144, N163, N178, N212, N237, N247, N264, N271, N276, N306, N425, N447, N513, N530, N579, N591, N669, N676, and N714. The interval 769 to 874 (IPFATQLQAR…QVDRLITGRL (106 aa)) is heptad repeat 1 (HR1). Residues 822 to 866 (QDVVNKQSAILTETMASLNKNFGAISSVIQEIYLQLDAIQANAQV) are a coiled coil. N-linked (GlcNAc...) asparagine; by host glycans are attached at residues N947, N960, N979, N1014, N1051, N1058, and N1074. The heptad repeat 2 (HR2) stretch occupies residues 1024 to 1105 (NDDFDFDDEL…VWLAIAFATI (82 aa)). Positions 1055–1083 (PVLNITYDIDKIEEVIKGLNDSLIDLETL) form a coiled coil. A helical transmembrane segment spans residues 1096–1116 (VWLAIAFATIIFILILGWVFF). Residues 1117–1162 (MTGCCGCCCGCFGIIPLMSKCGKKSSYYTTFDNDVVTEQYRPKKSV) are Cytoplasmic-facing. Positions 1159 to 1162 (KKSV) match the Di-lysine motif motif.

The protein belongs to the gammacoronaviruses spike protein family. As to quaternary structure, homotrimer; each monomer consists of a S1 and a S2 subunit. The resulting peplomers protrude from the virus surface as spikes. Post-translationally, specific enzymatic cleavages in vivo yield mature proteins. The precursor is processed into S1 and S2 by host cell furin or furin-like protease to yield the mature S1 and S2 proteins. The cleavage site between S1 and S2 requires the optimal sequence [KR]-X-[KR]-R. Additionally, a second cleavage leads to the release of a fusion peptide after viral attachment to host cell receptor.

It is found in the virion membrane. Its subcellular location is the host endoplasmic reticulum-Golgi intermediate compartment membrane. Functionally, attaches the virion to the host cell membrane by interacting with sialic acids, initiating the infection. In terms of biological role, mediates fusion of the virion and cellular membranes by acting as a class I viral fusion protein. Under the current model, the protein has at least 3 conformational states: pre-fusion native state, pre-hairpin intermediate state, and post-fusion hairpin state. During viral and target cell membrane fusion, the coiled coil regions (heptad repeats) assume a trimer-of-hairpins structure, positioning the fusion peptide in close proximity to the C-terminal region of the ectodomain. The formation of this structure appears to drive apposition and subsequent fusion of viral and target cell membranes. Acts as a viral fusion peptide after S2 cleavage occurring upon virus endocytosis. This chain is Spike glycoprotein, found in Avian infectious bronchitis virus (strain KB8523) (IBV).